The chain runs to 449 residues: Glutamyl-tRNA reductase (449 aa).

Substrate is bound by residues 49–52 (TCNR), S107, 112–114 (EPQ), and Q118. C50 acts as the Nucleophile in catalysis. Position 187-192 (187-192 (GAGETI)) interacts with NADP(+). Residues 418 to 449 (QLVERSSEGDDSQQAGADGGAARGDRRAAGGS) form a disordered region. A compositionally biased stretch (basic and acidic residues) spans 440–449 (RGDRRAAGGS).

This sequence belongs to the glutamyl-tRNA reductase family. Homodimer.

The catalysed reaction is (S)-4-amino-5-oxopentanoate + tRNA(Glu) + NADP(+) = L-glutamyl-tRNA(Glu) + NADPH + H(+). The protein operates within porphyrin-containing compound metabolism; protoporphyrin-IX biosynthesis; 5-aminolevulinate from L-glutamyl-tRNA(Glu): step 1/2. Functionally, catalyzes the NADPH-dependent reduction of glutamyl-tRNA(Glu) to glutamate 1-semialdehyde (GSA). This chain is Glutamyl-tRNA reductase, found in Halorhodospira halophila (strain DSM 244 / SL1) (Ectothiorhodospira halophila (strain DSM 244 / SL1)).